A 77-amino-acid polypeptide reads, in one-letter code: Secapin (77 aa).

An N-terminal signal peptide occupies residues 1–32 (MKNYSKNATYLITVLLFSFVAMLLIIPSKCEA). A propeptide spanning residues 33–52 (VSNDMQPLEARSADLVPEPR) is cleaved from the precursor. Cysteines 61 and 72 form a disulfide.

It belongs to the secapin family. In terms of tissue distribution, expressed by the venom gland.

The protein localises to the secreted. In terms of biological role, nontoxic peptide. In Vespa magnifica (Hornet), this protein is Secapin.